The primary structure comprises 643 residues: MAQKMLEDQDMLDQLLSGVHDSDLDFSESEEEEEEEESSSESESDEDSDMEVEPARQEAGPPEQCQQQPQQRAREQQPPPQQQQPQQREQGPPQQQQQQRTPKRGEESGDARPRARAPSGDAGPGPSGQARLPQQQQPQQPQQPPPKPPRQEVTVRAPGDRQQPQSQAAQPIPVIGGGCAPFQLRAPIAAAAATGWGGEQAPAQPLFQHVSPLNRRGDEDRRSGRDRRRREGRERDRESRSKGRNWYRPYPRGSSGARREGGGRDAGQGQGTRNPGPSQGGCEAGPSQAQAAQAARAPRQEQGERRQMLPQGQNLGPRPQQCPPQQCPPQPCPPFPLEALPILRAKFEPSCAVSYTNLVKSIQKIAMPPFLMRRREASPPCHFSKIPQATPGLVIPAAARTGEAKFEKFTDAFVQKVIDRGMSPQDCINKTVSLRKLDAKFDPLKTFTAKTVNFGQWLDVRKDSIINSGMSTQVVFLEELCAWAKLNLQHGCNLEERDLILHTAETVCSQLMYKLKPIMSCLEPNKPYASMAKQMAYLVCGAGRIQDAGMLLREVKVGSPLTMLVAFSLCVPVMITCRNRNPSLFNYCKSFLDMYQPGLLCALFNTMTSKLNTTCTEEECYASVRAAIGSVVNTRGLLFVPGI.

2 disordered regions span residues 1–180 and 194–329; these read MAQK…GGCA and TGWG…QCPP. The span at 24–52 shows a compositional bias: acidic residues; that stretch reads LDFSESEEEEEEEESSSESESDEDSDMEV. Composition is skewed to low complexity over residues 57 to 71 and 83 to 100; these read QEAG…QPQQ and QQPQ…QQQR. The segment covering 103–113 has biased composition (basic and acidic residues); that stretch reads KRGEESGDARP. Low complexity predominate over residues 162–171; sequence QQPQSQAAQP. Positions 215-241 are enriched in basic and acidic residues; sequence RRGDEDRRSGRDRRRREGRERDRESRS. A compositionally biased stretch (low complexity) spans 284–297; the sequence is AGPSQAQAAQAARA. The span at 298–307 shows a compositional bias: basic and acidic residues; it reads PRQEQGERRQ. Residues 320 to 329 show a composition bias toward pro residues; it reads QQCPPQQCPP.

The protein belongs to the herpesviridae UL69 family.

This is Immediate-early phosphoprotein 57 (57) from Equus caballus (Horse).